Reading from the N-terminus, the 232-residue chain is tRNA1(Val) (adenine(37)-N6)-methyltransferase (232 aa).

Belongs to the methyltransferase superfamily. tRNA (adenine-N(6)-)-methyltransferase family.

Its subcellular location is the cytoplasm. The catalysed reaction is adenosine(37) in tRNA1(Val) + S-adenosyl-L-methionine = N(6)-methyladenosine(37) in tRNA1(Val) + S-adenosyl-L-homocysteine + H(+). In terms of biological role, specifically methylates the adenine in position 37 of tRNA(1)(Val) (anticodon cmo5UAC). The protein is tRNA1(Val) (adenine(37)-N6)-methyltransferase of Haemophilus influenzae (strain 86-028NP).